A 173-amino-acid chain; its full sequence is Chorion protein S19 (173 aa).

Positions Met1 to Ala21 are cleaved as a signal peptide.

It belongs to the chorion protein S19 family.

It is found in the secreted. Its function is as follows. Chorion membrane (egg shell) protein; plays a role in protecting the egg from the environment. The chain is Chorion protein S19 (Cp19) from Drosophila melanogaster (Fruit fly).